Consider the following 249-residue polypeptide: Methyl-coenzyme M reductase subunit gamma (249 aa).

Residues 43–62 form a disordered region; that stretch reads RAPGEEYPSVHPPLEELDEP. Coenzyme M is bound at residue arginine 120.

The protein belongs to the methyl-coenzyme M reductase gamma subunit family. In terms of assembly, MCR is a hexamer of two alpha, two beta, and two gamma chains, forming a dimer of heterotrimers. Requires coenzyme F430 as cofactor.

Its subcellular location is the cytoplasm. It carries out the reaction coenzyme B + methyl-coenzyme M = methane + coenzyme M-coenzyme B heterodisulfide. Its pathway is one-carbon metabolism; methyl-coenzyme M reduction; methane from methyl-coenzyme M: step 1/1. Its function is as follows. Component of the methyl-coenzyme M reductase (MCR) I that catalyzes the reductive cleavage of methyl-coenzyme M (CoM-S-CH3 or 2-(methylthio)ethanesulfonate) using coenzyme B (CoB or 7-mercaptoheptanoylthreonine phosphate) as reductant which results in the production of methane and the mixed heterodisulfide of CoB and CoM (CoM-S-S-CoB). This is the final step in methanogenesis. The polypeptide is Methyl-coenzyme M reductase subunit gamma (mcrG) (Methanothermus fervidus).